A 992-amino-acid chain; its full sequence is Aminopeptidase Q (992 aa).

The Cytoplasmic segment spans residues 2–13 (GPPSSSGFYVSR). The helical; Signal-anchor for type II membrane protein transmembrane segment at 14–34 (AVALLLAALAAALLLALAVLA) threads the bilayer. Over 35–992 (ALYGRCARVQ…RMTAWLRKNT (958 aa)) the chain is Extracellular. The segment at 47-92 (DLHHSGVPDAASSPRGTQEEPLPTWPPRPTREPAGTATPGHWRPPG) is disordered. An N-linked (GlcNAc...) asparagine glycan is attached at Asn133. Residue Glu241 coordinates substrate. 4 N-linked (GlcNAc...) asparagine glycosylation sites follow: Asn262, Asn289, Asn347, and Asn361. 380–384 (SAMEN) serves as a coordination point for substrate. His416 is a binding site for Zn(2+). The active-site Proton acceptor is the Glu417. Positions 420 and 439 each coordinate Zn(2+). The Proton donor role is filled by Tyr505. 8 N-linked (GlcNAc...) asparagine glycosylation sites follow: Asn555, Asn584, Asn602, Asn609, Asn655, Asn811, Asn850, and Asn889.

The protein belongs to the peptidase M1 family. Zn(2+) is required as a cofactor. As to expression, expressed in skin. Expression levels do not differ between dark and light skin areas.

It localises to the membrane. Functionally, metalloprotease which may be important for placentation by regulating biological activity of key peptides at the embryo-maternal interface. Involved in coat pigmentation patterns. During skin development, may be required to establish the periodicity of tabby markings, initiating a pre-pattern at or before hair follicle development. The polypeptide is Aminopeptidase Q (LVRN) (Felis catus (Cat)).